Consider the following 180-residue polypeptide: Crossover junction endodeoxyribonuclease RuvC (180 aa).

Residues Asp-7, Glu-66, and Asp-138 contribute to the active site. Mg(2+) contacts are provided by Asp-7, Glu-66, and Asp-138.

Belongs to the RuvC family. Homodimer which binds Holliday junction (HJ) DNA. The HJ becomes 2-fold symmetrical on binding to RuvC with unstacked arms; it has a different conformation from HJ DNA in complex with RuvA. In the full resolvosome a probable DNA-RuvA(4)-RuvB(12)-RuvC(2) complex forms which resolves the HJ. Mg(2+) is required as a cofactor.

It is found in the cytoplasm. It catalyses the reaction Endonucleolytic cleavage at a junction such as a reciprocal single-stranded crossover between two homologous DNA duplexes (Holliday junction).. The RuvA-RuvB-RuvC complex processes Holliday junction (HJ) DNA during genetic recombination and DNA repair. Endonuclease that resolves HJ intermediates. Cleaves cruciform DNA by making single-stranded nicks across the HJ at symmetrical positions within the homologous arms, yielding a 5'-phosphate and a 3'-hydroxyl group; requires a central core of homology in the junction. The consensus cleavage sequence is 5'-(A/T)TT(C/G)-3'. Cleavage occurs on the 3'-side of the TT dinucleotide at the point of strand exchange. HJ branch migration catalyzed by RuvA-RuvB allows RuvC to scan DNA until it finds its consensus sequence, where it cleaves and resolves the cruciform DNA. The chain is Crossover junction endodeoxyribonuclease RuvC from Herminiimonas arsenicoxydans.